Here is a 139-residue protein sequence, read N- to C-terminus: Actin-depolymerizing factor 1 (139 aa).

Residues 5–139 enclose the ADF-H domain; that stretch reads SSGLAVNDEC…SLDIVRSRTN (135 aa).

This sequence belongs to the actin-binding proteins ADF family. Expressed in pollen.

Functionally, actin-depolymerizing protein. Severs actin filaments (F-actin) and binds to actin monomers. The polypeptide is Actin-depolymerizing factor 1 (ADF1) (Zea mays (Maize)).